Reading from the N-terminus, the 395-residue chain is Innexin inx3 (395 aa).

Over Met-1–Thr-37 the chain is Cytoplasmic. The chain crosses the membrane as a helical span at residues Thr-38 to Ile-58. The Extracellular portion of the chain corresponds to Ser-59 to Tyr-114. Residues Gln-115–Trp-135 form a helical membrane-spanning segment. The Cytoplasmic portion of the chain corresponds to Lys-136–Ser-183. A helical transmembrane segment spans residues Phe-184 to Val-204. At Asp-205–Lys-272 the chain is on the extracellular side. A helical transmembrane segment spans residues Ile-273–Leu-293. Over Tyr-294–Thr-395 the chain is Cytoplasmic. A phosphoserine mark is found at Ser-366 and Ser-377. Residue Tyr-381 is modified to Phosphotyrosine.

It belongs to the pannexin family. Heterooligomer of Inx2 (via cytoplasmic C-terminal region) and Inx3 (via cytoplasmic C-terminal region). In ovary, expressed in nurse cells and follicle cells. Expressed in embryonic epithelial cells. Ubiquitously expressed in stage 5 embryos. Expressed in foregut and hindgut from stage 11-17 and in proventriculus, epidermis and CNS in stage 16 embryos (at protein level). Expressed in anterior and ventral regions in stage 8 embryos. Repeating epidermal pattern emerges at stage 11, refines to one or two cells at each side of the segment borders by stage 13. Expressed in the imaginal wing disk. In pupae, expressed in the CNS and in secondary and tertiary pigment cells of the retina.

The protein localises to the cell membrane. The protein resides in the cell junction. It is found in the gap junction. It localises to the cytoplasm. Its subcellular location is the lateral cell membrane. The protein localises to the apicolateral cell membrane. In terms of biological role, structural components of the gap junctions. Essential for proper epithelial development of the epidermis. The polypeptide is Innexin inx3 (Inx3) (Drosophila melanogaster (Fruit fly)).